The sequence spans 399 residues: Bombesin receptor subtype-3 (399 aa).

The Extracellular portion of the chain corresponds to Met1 to Ser41. 2 N-linked (GlcNAc...) asparagine glycosylation sites follow: Asn10 and Asn18. The helical transmembrane segment at Pro42 to Leu63 threads the bilayer. Over Gly64–Pro82 the chain is Cytoplasmic. A helical transmembrane segment spans residues Asn83–Val103. Topologically, residues Asp104–Lys121 are extracellular. Cys120 and Cys203 are joined by a disulfide. Residues Val122–Ala143 traverse the membrane as a helical segment. Topologically, residues Asp144–Lys163 are cytoplasmic. The helical transmembrane segment at Thr164–Ile184 threads the bilayer. Over Phe185–Leu220 the chain is Extracellular. The helical transmembrane segment at Cys221–Ala241 threads the bilayer. Topologically, residues Arg242–Thr272 are cytoplasmic. Residues Val273–Tyr293 traverse the membrane as a helical segment. The Extracellular segment spans residues His294–Ile313. The chain crosses the membrane as a helical span at residues Phe314–Leu333. Residues Ser334–Phe399 lie on the Cytoplasmic side of the membrane. Residue Cys347 is the site of S-palmitoyl cysteine attachment.

Belongs to the G-protein coupled receptor 1 family. As to quaternary structure, interacts with C6orf89. As to expression, in germ cells in testis. Lung carcinoma cells.

The protein resides in the cell membrane. Functionally, role in sperm cell division, maturation, or function. This receptor mediates its action by association with G proteins that activate a phosphatidylinositol-calcium second messenger system. The protein is Bombesin receptor subtype-3 (BRS3) of Homo sapiens (Human).